We begin with the raw amino-acid sequence, 233 residues long: DNA repair protein RecO (233 aa).

This sequence belongs to the RecO family.

Its function is as follows. Involved in DNA repair and RecF pathway recombination. This is DNA repair protein RecO from Pseudomonas paraeruginosa (strain DSM 24068 / PA7) (Pseudomonas aeruginosa (strain PA7)).